We begin with the raw amino-acid sequence, 129 residues long: Replication initiation control protein YabA (129 aa).

Residues histidine 103, cysteine 105, cysteine 119, and cysteine 122 each contribute to the Zn(2+) site.

This sequence belongs to the YabA family. As to quaternary structure, homotetramer. Interacts with both DnaA and DnaN, acting as a bridge between these two proteins. It depends on Zn(2+) as a cofactor.

It is found in the cytoplasm. It localises to the nucleoid. Functionally, involved in control of chromosome replication initiation. Inhibits the cooperative binding of DnaA to the oriC region, thus negatively regulating initiation of chromosome replication. Inhibits the ability of DnaA-ATP to form a helix on DNA; does not disassemble preformed DnaA-DNA helices. Decreases the residence time of DnaA on the chromosome at its binding sites (oriC, replication forks and promoter-binding sites). Tethers DnaA to the replication machinery via the DNA polymerase beta sliding clamp subunit (dnaN). Associates with oriC and other DnaA targets on the chromosome in a DnaA-dependent manner. This is Replication initiation control protein YabA from Listeria monocytogenes serotype 4b (strain CLIP80459).